We begin with the raw amino-acid sequence, 201 residues long: Molybdenum cofactor guanylyltransferase (201 aa).

Residues 14 to 16 (LAG), K31, and D104 contribute to the GTP site. D104 lines the Mg(2+) pocket.

Belongs to the MobA family. Monomer. The cofactor is Mg(2+).

The protein localises to the cytoplasm. It carries out the reaction Mo-molybdopterin + GTP + H(+) = Mo-molybdopterin guanine dinucleotide + diphosphate. Its function is as follows. Transfers a GMP moiety from GTP to Mo-molybdopterin (Mo-MPT) cofactor (Moco or molybdenum cofactor) to form Mo-molybdopterin guanine dinucleotide (Mo-MGD) cofactor. This Helicobacter pylori (strain G27) protein is Molybdenum cofactor guanylyltransferase.